Consider the following 470-residue polypeptide: Ribulose bisphosphate carboxylase large chain (470 aa).

Substrate-binding residues include N115 and T165. The active-site Proton acceptor is the K167. Residue K169 participates in substrate binding. Residues K193, D195, and E196 each contribute to the Mg(2+) site. Residue K193 is modified to N6-carboxylysine. H286 serves as the catalytic Proton acceptor. Substrate is bound by residues R287, H319, and S371.

It belongs to the RuBisCO large chain family. Type I subfamily. As to quaternary structure, heterohexadecamer of 8 large chains and 8 small chains. It depends on Mg(2+) as a cofactor.

Its subcellular location is the carboxysome. It catalyses the reaction 2 (2R)-3-phosphoglycerate + 2 H(+) = D-ribulose 1,5-bisphosphate + CO2 + H2O. It carries out the reaction D-ribulose 1,5-bisphosphate + O2 = 2-phosphoglycolate + (2R)-3-phosphoglycerate + 2 H(+). In terms of biological role, ruBisCO catalyzes two reactions: the carboxylation of D-ribulose 1,5-bisphosphate, the primary event in carbon dioxide fixation, as well as the oxidative fragmentation of the pentose substrate in the photorespiration process. Both reactions occur simultaneously and in competition at the same active site. The protein is Ribulose bisphosphate carboxylase large chain of Prochlorococcus marinus (strain NATL1A).